The chain runs to 418 residues: Protein MAEA homolog (418 aa).

Residues 141-173 (NNTKLKRILVDYMLRMSYFETATKLSESSNIMD) enclose the LisH domain. The CTLH domain occupies 179–236 (IFREAKKVIDALKNREVASALTWCADNKTRLKKSKSKFEFQLRLQEFIELVRVDTAES). Residues 330–403 (CTKEDPLSQE…NGGKITCPRT (74 aa)) form an RING-Gid-type zinc finger.

In terms of assembly, interacts with RANBPM.

The protein localises to the cytoplasm. The protein is Protein MAEA homolog of Arabidopsis thaliana (Mouse-ear cress).